The chain runs to 704 residues: Glycine--tRNA ligase beta subunit (704 aa).

It belongs to the class-II aminoacyl-tRNA synthetase family. Tetramer of two alpha and two beta subunits.

The protein localises to the cytoplasm. The catalysed reaction is tRNA(Gly) + glycine + ATP = glycyl-tRNA(Gly) + AMP + diphosphate. This chain is Glycine--tRNA ligase beta subunit, found in Rhizobium etli (strain ATCC 51251 / DSM 11541 / JCM 21823 / NBRC 15573 / CFN 42).